Here is a 291-residue protein sequence, read N- to C-terminus: Proteasome subunit beta (291 aa).

Residues 1–56 constitute a propeptide, removed in mature form; by autocatalysis; that stretch reads MTRSFPDRLPTNLAFPGISVINQSSFVDLLRRQAPELLPVSLGGGQSGGGQQLSHG. The Nucleophile role is filled by Thr-57.

It belongs to the peptidase T1B family. As to quaternary structure, the 20S proteasome core is composed of 14 alpha and 14 beta subunits that assemble into four stacked heptameric rings, resulting in a barrel-shaped structure. The two inner rings, each composed of seven catalytic beta subunits, are sandwiched by two outer rings, each composed of seven alpha subunits. The catalytic chamber with the active sites is on the inside of the barrel. Has a gated structure, the ends of the cylinder being occluded by the N-termini of the alpha-subunits. Is capped by the proteasome-associated ATPase, ARC.

Its subcellular location is the cytoplasm. It catalyses the reaction Cleavage of peptide bonds with very broad specificity.. Its pathway is protein degradation; proteasomal Pup-dependent pathway. With respect to regulation, the formation of the proteasomal ATPase ARC-20S proteasome complex, likely via the docking of the C-termini of ARC into the intersubunit pockets in the alpha-rings, may trigger opening of the gate for substrate entry. Interconversion between the open-gate and close-gate conformations leads to a dynamic regulation of the 20S proteasome proteolysis activity. Component of the proteasome core, a large protease complex with broad specificity involved in protein degradation. The chain is Proteasome subunit beta from Mycobacterium leprae (strain Br4923).